The chain runs to 361 residues: Peptide chain release factor 1 (361 aa).

At Gln238 the chain carries N5-methylglutamine.

Belongs to the prokaryotic/mitochondrial release factor family. Post-translationally, methylated by PrmC. Methylation increases the termination efficiency of RF1.

The protein localises to the cytoplasm. Its function is as follows. Peptide chain release factor 1 directs the termination of translation in response to the peptide chain termination codons UAG and UAA. The polypeptide is Peptide chain release factor 1 (Mesomycoplasma hyopneumoniae (strain J / ATCC 25934 / NCTC 10110) (Mycoplasma hyopneumoniae)).